We begin with the raw amino-acid sequence, 253 residues long: Regulatory protein VirG (253 aa).

The Response regulatory domain occupies 15–129 (HVLVIDDDVA…EFLARIRVAL (115 aa)). Position 64 is a 4-aspartylphosphate (Asp64). A DNA-binding region (ompR/PhoB-type) is located at residues 141 to 241 (RRSFSFADWT…ARGAGYFFDA (101 aa)).

In terms of processing, phosphorylated by wide host range (WHR) VirA protein.

It is found in the cytoplasm. Its function is as follows. VirG is required for the positive regulation of at least two vir loci encoded by the Ti plasmid of A.tumefaciens. In Agrobacterium fabrum (strain C58 / ATCC 33970) (Agrobacterium tumefaciens (strain C58)), this protein is Regulatory protein VirG (virG).